The following is an 86-amino-acid chain: Candiduxin-1 (86 aa).

Residues 1 to 21 (MKTLLLTLVVLTIACLDLGYT) form the signal peptide. Intrachain disulfides connect Cys24-Cys45, Cys38-Cys62, Cys66-Cys78, and Cys79-Cys84.

The protein belongs to the three-finger toxin family. Short-chain subfamily. Orphan group IX sub-subfamily. As to expression, expressed by the venom gland.

Its subcellular location is the secreted. The polypeptide is Candiduxin-1 (Bungarus candidus (Malayan krait)).